Reading from the N-terminus, the 486-residue chain is ATP synthase subunit beta (486 aa).

164 to 171 (GGAGVGKT) serves as a coordination point for ATP.

This sequence belongs to the ATPase alpha/beta chains family. As to quaternary structure, F-type ATPases have 2 components, CF(1) - the catalytic core - and CF(0) - the membrane proton channel. CF(1) has five subunits: alpha(3), beta(3), gamma(1), delta(1), epsilon(1). CF(0) has four main subunits: a(1), b(1), b'(1) and c(9-12).

It localises to the cellular thylakoid membrane. It carries out the reaction ATP + H2O + 4 H(+)(in) = ADP + phosphate + 5 H(+)(out). Its function is as follows. Produces ATP from ADP in the presence of a proton gradient across the membrane. The catalytic sites are hosted primarily by the beta subunits. The sequence is that of ATP synthase subunit beta from Prochlorococcus marinus (strain MIT 9312).